The sequence spans 261 residues: Type II restriction enzyme Sau96I (261 aa).

As to quaternary structure, monomer.

The catalysed reaction is Endonucleolytic cleavage of DNA to give specific double-stranded fragments with terminal 5'-phosphates.. A P subtype restriction enzyme that recognizes the double-stranded sequence 5'-GGNCC-3' and cleaves after G-1. This is Type II restriction enzyme Sau96I from Staphylococcus aureus.